Consider the following 266-residue polypeptide: Pre-mRNA-splicing factor PRP11 (266 aa).

Residues 1–21 (MNYLEGVGSKKGGGGIASESQ) are disordered. The segment at 66–96 (LVCKLCNTMHMSWSSVERHLGGKKHGLNVLR) adopts a Matrin-type zinc-finger fold.

This sequence belongs to the SF3A2 family. As to quaternary structure, belongs to the CWC complex (or CEF1-associated complex), a spliceosome sub-complex reminiscent of a late-stage spliceosome composed of the U2, U5 and U6 snRNAs and at least BUD13, BUD31, BRR2, CDC40, CEF1, CLF1, CUS1, CWC2, CWC15, CWC21, CWC22, CWC23, CWC24, CWC25, CWC27, ECM2, HSH155, IST3, ISY1, LEA1, MSL1, NTC20, PRP8, PRP9, PRP11, PRP19, PRP21, PRP22, PRP45, PRP46, SLU7, SMB1, SMD1, SMD2, SMD3, SMX2, SMX3, SNT309, SNU114, SPP2, SYF1, SYF2, RSE1 and YJU2. Interacts with CUS2.

It is found in the nucleus. In terms of biological role, mRNA splicing factors, PRP9, PRP11, and PRP21, are necessary for addition of the U2 snRNP to the pre-mRNA in an early step of spliceosome assembly. In Saccharomyces cerevisiae (strain ATCC 204508 / S288c) (Baker's yeast), this protein is Pre-mRNA-splicing factor PRP11 (PRP11).